We begin with the raw amino-acid sequence, 138 residues long: Venom allergen 2 (138 aa).

The first 19 residues, 1–19 (MKSFVLATCLLGFAQIIYA), serve as a signal peptide directing secretion.

It belongs to the ant venom allergen 2/4 family. As to quaternary structure, homodimer; disulfide-linked. As to expression, expressed by the venom gland.

It is found in the secreted. The protein is Venom allergen 2 of Solenopsis saevissima (Fire ant).